The primary structure comprises 542 residues: CTP synthase (542 aa).

The segment at 1-266 is amidoligase domain; it reads MATNYIFVTG…DDFICQRFHL (266 aa). Serine 14 contacts CTP. Serine 14 is a UTP binding site. ATP is bound by residues 15–20 and aspartate 72; that span reads SLGKGI. The Mg(2+) site is built by aspartate 72 and glutamate 140. CTP contacts are provided by residues 147–149, 187–192, and lysine 223; these read DIE and KTKPTQ. UTP contacts are provided by residues 187–192 and lysine 223; that span reads KTKPTQ. 239–241 contacts ATP; sequence KDV. The region spanning 291–542 is the Glutamine amidotransferase type-1 domain; that stretch reads VIGMVGKYTE…VKAAKDNQKK (252 aa). Glycine 352 contributes to the L-glutamine binding site. The active-site Nucleophile; for glutamine hydrolysis is the cysteine 379. L-glutamine contacts are provided by residues 380–383, glutamate 403, and arginine 470; that span reads LGMQ. Active-site residues include histidine 515 and glutamate 517.

It belongs to the CTP synthase family. As to quaternary structure, homotetramer.

The catalysed reaction is UTP + L-glutamine + ATP + H2O = CTP + L-glutamate + ADP + phosphate + 2 H(+). It carries out the reaction L-glutamine + H2O = L-glutamate + NH4(+). The enzyme catalyses UTP + NH4(+) + ATP = CTP + ADP + phosphate + 2 H(+). Its pathway is pyrimidine metabolism; CTP biosynthesis via de novo pathway; CTP from UDP: step 2/2. Its activity is regulated as follows. Allosterically activated by GTP, when glutamine is the substrate; GTP has no effect on the reaction when ammonia is the substrate. The allosteric effector GTP functions by stabilizing the protein conformation that binds the tetrahedral intermediate(s) formed during glutamine hydrolysis. Inhibited by the product CTP, via allosteric rather than competitive inhibition. In terms of biological role, catalyzes the ATP-dependent amination of UTP to CTP with either L-glutamine or ammonia as the source of nitrogen. Regulates intracellular CTP levels through interactions with the four ribonucleotide triphosphates. The polypeptide is CTP synthase (Pasteurella multocida (strain Pm70)).